The chain runs to 147 residues: Hemoglobin subunit beta (147 aa).

A Globin domain is found at 3-147 (HWSCEEKQFI…VAHALALGYH (145 aa)). Residues histidine 64 and histidine 93 each contribute to the heme b site.

The protein belongs to the globin family. As to quaternary structure, heterotetramer of two alpha-D chains and two beta chains. As to expression, red blood cells.

Functionally, involved in oxygen transport from the lung to the various peripheral tissues. This is Hemoglobin subunit beta (HBB) from Chelonoidis carbonarius (Red-footed tortoise).